We begin with the raw amino-acid sequence, 408 residues long: MSKFAVRKFYTSESVSEGHPDKLSDFISDSILDEFLRQEPTSRVAVETLVTTGMAVVAGEVRAHTAHVDIQKTVREAVQRVGYTRANYGFDAEYSAVLVAIHEQSPEIASGVDHSEEWREMSEAERQKPENAYSMVGAGDQGLMFGYATDETPELMPLPISLAHGLTRRLAELRKDGTLPYLRPDAKAQVTVVRNGEPHSATETAVDTIVISTQHSDDVTQEQIRADMLEHVIPAVIPAELLNEQTRYFINPSGRFVIGGPHGDTGLTGRKIIVDTYGGAVPHGGGAFSGKDPTKVDRSAAYYARYVAKNIVAAGLARRALVEIAYAIGRAHPVSLRVDTYGTGTVSDEKLDELIAAHFDARPQAIIAQLDLQRPIYAQTAAYGHFGRPEFPWEQTDRAQALKEAAQG.

H19 lines the ATP pocket. D21 contributes to the Mg(2+) binding site. Residue E47 coordinates K(+). L-methionine contacts are provided by E60 and Q104. Residues 104–114 (QSPEIASGVDH) are flexible loop. ATP is bound by residues 185-187 (DAK), 255-256 (RF), D264, 270-271 (RK), A287, and K291. D264 lines the L-methionine pocket. K295 is an L-methionine binding site.

It belongs to the AdoMet synthase family. Homotetramer; dimer of dimers. Mg(2+) is required as a cofactor. The cofactor is K(+).

It localises to the cytoplasm. It carries out the reaction L-methionine + ATP + H2O = S-adenosyl-L-methionine + phosphate + diphosphate. It participates in amino-acid biosynthesis; S-adenosyl-L-methionine biosynthesis; S-adenosyl-L-methionine from L-methionine: step 1/1. Its function is as follows. Catalyzes the formation of S-adenosylmethionine (AdoMet) from methionine and ATP. The overall synthetic reaction is composed of two sequential steps, AdoMet formation and the subsequent tripolyphosphate hydrolysis which occurs prior to release of AdoMet from the enzyme. The protein is S-adenosylmethionine synthase of Deinococcus radiodurans (strain ATCC 13939 / DSM 20539 / JCM 16871 / CCUG 27074 / LMG 4051 / NBRC 15346 / NCIMB 9279 / VKM B-1422 / R1).